We begin with the raw amino-acid sequence, 95 residues long: Beta-defensin 132 (95 aa).

The first 22 residues, M1–A22, serve as a signal peptide directing secretion. 3 disulfide bridges follow: C27/C55, C35/C49, and C39/C56. The disordered stretch occupies residues H74–S95. Basic residues predominate over residues Q76 to K87.

The protein belongs to the beta-defensin family.

It is found in the secreted. Functionally, has antibacterial activity. This chain is Beta-defensin 132 (DEFB132), found in Homo sapiens (Human).